The following is a 173-amino-acid chain: Crossover junction endodeoxyribonuclease RuvC (173 aa).

Active-site residues include aspartate 8, glutamate 67, and aspartate 139. The Mg(2+) site is built by aspartate 8, glutamate 67, and aspartate 139.

This sequence belongs to the RuvC family. In terms of assembly, homodimer which binds Holliday junction (HJ) DNA. The HJ becomes 2-fold symmetrical on binding to RuvC with unstacked arms; it has a different conformation from HJ DNA in complex with RuvA. In the full resolvosome a probable DNA-RuvA(4)-RuvB(12)-RuvC(2) complex forms which resolves the HJ. It depends on Mg(2+) as a cofactor.

Its subcellular location is the cytoplasm. The catalysed reaction is Endonucleolytic cleavage at a junction such as a reciprocal single-stranded crossover between two homologous DNA duplexes (Holliday junction).. Its function is as follows. The RuvA-RuvB-RuvC complex processes Holliday junction (HJ) DNA during genetic recombination and DNA repair. Endonuclease that resolves HJ intermediates. Cleaves cruciform DNA by making single-stranded nicks across the HJ at symmetrical positions within the homologous arms, yielding a 5'-phosphate and a 3'-hydroxyl group; requires a central core of homology in the junction. The consensus cleavage sequence is 5'-(A/T)TT(C/G)-3'. Cleavage occurs on the 3'-side of the TT dinucleotide at the point of strand exchange. HJ branch migration catalyzed by RuvA-RuvB allows RuvC to scan DNA until it finds its consensus sequence, where it cleaves and resolves the cruciform DNA. This is Crossover junction endodeoxyribonuclease RuvC from Erwinia tasmaniensis (strain DSM 17950 / CFBP 7177 / CIP 109463 / NCPPB 4357 / Et1/99).